The primary structure comprises 285 residues: Bark agglutinin I polypeptide A (285 aa).

An N-terminal signal peptide occupies residues 1–31; it reads MTSYNFKTQTSFPLLLSISFFFLLLLNKVNS. Asn-147 carries an N-linked (GlcNAc...) asparagine glycan. Residues Glu-156 and Asp-158 each coordinate Mn(2+). Asp-158, Phe-160, Asn-162, and Asp-166 together coordinate Ca(2+). 2 residues coordinate Mn(2+): Asp-166 and His-171. N-linked (GlcNAc...) asparagine glycosylation occurs at Asn-188.

Belongs to the leguminous lectin family. As to quaternary structure, RPbAI is composed of two polypeptides, A and B, that associate into five different tetrameric isolectins. The A4 combination is the only one devoid of agglutination activity. Isoform B4 displays maximal agglutination activity. In terms of tissue distribution, strong expression in seed. Lower levels in the flower, and the bark of the roots. No expression in leaf. The lectin accumulates in the inner bark in autumn.

Functionally, N-acetyl-D-galactosamine specific lectin. Bark lectins are storage protein that probably maintains stocks of nitrogen during dormant period. Self-aggregatable molecules that can bind their own carbohydrate side chains. They could also play a role in the plant's defense against phytophagous invertebrates or herbivorous higher animals. The protein is Bark agglutinin I polypeptide A of Robinia pseudoacacia (Black locust).